A 317-amino-acid chain; its full sequence is MMDIMTDHENPAVTGEDNALPTRSGFVALIGPTNAGKSTLVNRLVGAKVSIVSHKVQTTRAVMRGIAIHKNAQIVFMDTPGIFKPRRRLDRAMVTSAWGGAKDADLILLLIDSERGLKGDAEAILEGLKDVPQKKILCLNKIDQVKREDLLKLAAAANEKVAFDRTFMISATNGSGCEDLMDYLVETLPEGPWYYPEDQISDLPMRQLAAEITREKLFLRLHQELPYASHVETEKWEERKDGSVRIEQVIYVERDSQKKIALGKNGDAIKAISTASRKELSEILEQPVHLFLFVKVRENWGDDPERFREMGLEFPRG.

One can recognise an Era-type G domain in the interval 23–190; it reads RSGFVALIGP…MDYLVETLPE (168 aa). Residues 31–38 form a G1 region; sequence GPTNAGKS. 31–38 serves as a coordination point for GTP; sequence GPTNAGKS. A G2 region spans residues 57–61; that stretch reads QTTRA. Residues 78-81 are G3; that stretch reads DTPG. Residues 78–82 and 140–143 contribute to the GTP site; these read DTPGI and NKID. The interval 140-143 is G4; it reads NKID. A G5 region spans residues 169–171; it reads ISA. The KH type-2 domain occupies 221-298; it reads LHQELPYASH…HLFLFVKVRE (78 aa).

The protein belongs to the TRAFAC class TrmE-Era-EngA-EngB-Septin-like GTPase superfamily. Era GTPase family. Monomer.

The protein localises to the cytoplasm. Its subcellular location is the cell inner membrane. An essential GTPase that binds both GDP and GTP, with rapid nucleotide exchange. Plays a role in 16S rRNA processing and 30S ribosomal subunit biogenesis and possibly also in cell cycle regulation and energy metabolism. The polypeptide is GTPase Era (Agrobacterium fabrum (strain C58 / ATCC 33970) (Agrobacterium tumefaciens (strain C58))).